A 100-amino-acid chain; its full sequence is Urease subunit gamma (100 aa).

Belongs to the urease gamma subunit family. In terms of assembly, heterotrimer of UreA (gamma), UreB (beta) and UreC (alpha) subunits. Three heterotrimers associate to form the active enzyme.

Its subcellular location is the cytoplasm. It catalyses the reaction urea + 2 H2O + H(+) = hydrogencarbonate + 2 NH4(+). The protein operates within nitrogen metabolism; urea degradation; CO(2) and NH(3) from urea (urease route): step 1/1. This is Urease subunit gamma from Escherichia coli O157:H7 (strain EC4115 / EHEC).